We begin with the raw amino-acid sequence, 283 residues long: Probable 3-deoxy-manno-octulosonic acid transferase (283 aa).

It localises to the cytoplasm. The catalysed reaction is an alpha-Kdo-(2-&gt;4)-alpha-Kdo-(2-&gt;6)-lipid IVA + CMP-3-deoxy-beta-D-manno-octulosonate = an alpha-Kdo-(2-&gt;4)-alpha-Kdo-(2-&gt;4)-alpha-Kdo-(2-&gt;6)-lipid IVA + CMP + H(+). It carries out the reaction alpha-Kdo-(2-&gt;4)-alpha-Kdo-(2-&gt;6)-lipid IVA (E. coli) + CMP-3-deoxy-beta-D-manno-octulosonate = alpha-Kdo-(2-&gt;4)-alpha-Kdo-(2-&gt;4)-alpha-Kdo-(2-&gt;6)-lipid IVA + CMP + H(+). The protein operates within bacterial outer membrane biogenesis; LPS core biosynthesis. Its pathway is bacterial outer membrane biogenesis; LOS core biosynthesis. Its function is as follows. Involved in the biosynthesis of the core oligosaccharide region of lipopolysaccharide (LPS). Required for the addition of 3-deoxy-D-manno-oct-2-ulosonic acid III (KdoIII) to the KdoII residue of the inner lipopolysaccharide core. May also play a role in a lipooligosaccharide (LOS) biosynthesis pathway. The protein is Probable 3-deoxy-manno-octulosonic acid transferase of Escherichia coli (strain K12).